A 459-amino-acid chain; its full sequence is Interleukin-7 receptor subunit alpha (459 aa).

A signal peptide spans 1–20 (MMALGRAFAIVFCLIQAVSG). Residues 21-239 (ESGNAQDGDL…PEPKNQGGWD (219 aa)) are Extracellular-facing. Cys-42 and Cys-57 are disulfide-bonded. Asn-60 is a glycosylation site (N-linked (GlcNAc...) asparagine). 2 disulfides stabilise this stretch: Cys-74-Cys-82 and Cys-108-Cys-118. Residues Asn-115 and Asn-177 are each glycosylated (N-linked (GlcNAc...) asparagine). A Fibronectin type-III domain is found at 131 to 232 (APSDLKVVYR…PSSTFETPEP (102 aa)). The WSXWS motif signature appears at 218–222 (WSEWS). Residues 240–264 (PVLPSVTILSLFSVFLLVILAHVLW) traverse the membrane as a helical segment. The Cytoplasmic portion of the chain corresponds to 265–459 (KKRIKPVVWP…VTMSSFYQNK (195 aa)). The Box 1 motif motif lies at 272–280 (VWPSLPDHK). A Phosphothreonine; by PKC modification is found at Thr-282. Disordered regions lie at residues 337–365 (TQGHRAAVHSANRSPETSVSPPETVRRES) and 378–413 (NAPPLLSSRSPDYRDGDRNRPPVYQDLLPNSGNTNV). A compositionally biased stretch (polar residues) spans 347–357 (ANRSPETSVSP). Over residues 388–397 (PDYRDGDRNR) the composition is skewed to basic and acidic residues.

This sequence belongs to the type I cytokine receptor family. Type 4 subfamily. In terms of assembly, the IL7 receptor is a heterodimer of IL7R and IL2RG. The TSLP receptor is a heterodimer of CRLF2 and IL7R. Interacts with CD53. Post-translationally, N-glycosylated IL-7Ralpha binds IL7 300-fold more tightly than the unglycosylated form. Ubiquitinated by MARCHF8; leading to lysosomal degradation. Spleen, thymus and fetal liver.

It is found in the membrane. Receptor for interleukin-7. Also acts as a receptor for thymic stromal lymphopoietin (TSLP). The sequence is that of Interleukin-7 receptor subunit alpha (Il7r) from Mus musculus (Mouse).